A 349-amino-acid chain; its full sequence is Probable inactive tRNA-specific adenosine deaminase-like protein 3 (349 aa).

Position 1 is an N-acetylmethionine (methionine 1). Residues 1–25 (MEPTSGFAEQPGPVKAESEEQEPAQ) form a disordered region. Positions 171 to 334 (AAMQTHMERA…PDLNHRFQVF (164 aa)) constitute a CMP/dCMP-type deaminase domain. Residues histidine 223, cysteine 289, and cysteine 292 each coordinate Zn(2+).

The protein belongs to the cytidine and deoxycytidylate deaminase family. ADAT3 subfamily. The cofactor is Zn(2+).

This is Probable inactive tRNA-specific adenosine deaminase-like protein 3 (Adat3) from Mus musculus (Mouse).